We begin with the raw amino-acid sequence, 342 residues long: S-adenosylmethionine:tRNA ribosyltransferase-isomerase (342 aa).

This sequence belongs to the QueA family. Monomer.

Its subcellular location is the cytoplasm. The enzyme catalyses 7-aminomethyl-7-carbaguanosine(34) in tRNA + S-adenosyl-L-methionine = epoxyqueuosine(34) in tRNA + adenine + L-methionine + 2 H(+). It functions in the pathway tRNA modification; tRNA-queuosine biosynthesis. Its function is as follows. Transfers and isomerizes the ribose moiety from AdoMet to the 7-aminomethyl group of 7-deazaguanine (preQ1-tRNA) to give epoxyqueuosine (oQ-tRNA). The sequence is that of S-adenosylmethionine:tRNA ribosyltransferase-isomerase from Moorella thermoacetica (strain ATCC 39073 / JCM 9320).